The primary structure comprises 336 residues: Potassium channel subfamily K member 1 (336 aa).

Over 1–20 the chain is Cytoplasmic; it reads MLQSLAGSSCVRLVERHRSA. Residues 21 to 41 traverse the membrane as a helical segment; that stretch reads WCFGLLVLGYLLYLVFGAVVF. At 42–103 the chain is on the extracellular side; sequence SSVELPYEDL…SNASGNWNWD (62 aa). The N-linked (GlcNAc...) asparagine glycan is linked to Asn95. The segment at residues 104–116 is an intramembrane region (helical); that stretch reads FTSALFFASTVLS. Residues 117–122 lie within the membrane without spanning it; sequence TTGYGH. The tract at residues 117–122 is selectivity filter 1; it reads TTGYGH. Residues 123-132 are Extracellular-facing; the sequence is TVPLSDGGKA. Residues 133–156 form a helical membrane-spanning segment; sequence FCIIYSVIGIPFTLLFLTAVVQRI. The Cytoplasmic portion of the chain corresponds to 157–181; the sequence is TVHVTRRPVLYFHIRWGFSKQMVGI. The chain crosses the membrane as a helical span at residues 182 to 202; it reads VHAVVLGFVTVSCFFFIPAAV. The Extracellular segment spans residues 203–211; it reads FSVLEDDWN. Residues 212–224 constitute an intramembrane region (helical); the sequence is FLESFYFCFISLS. The tract at residues 225-230 is selectivity filter 2; it reads TIGLGD. Residues 225-231 lie within the membrane without spanning it; that stretch reads TIGLGDY. At 232–243 the chain is on the extracellular side; sequence VPGEGYNQKFRE. Residues 244 to 267 traverse the membrane as a helical segment; it reads LYKIGITCYLLLGLIAMLVVLETF. The Cytoplasmic segment spans residues 268-336; that stretch reads CELHELKKFR…SAYAEDSASH (69 aa). Lys274 participates in a covalent cross-link: Glycyl lysine isopeptide (Lys-Gly) (interchain with G-Cter in SUMO). The important for intracellular retention in recycling endosomes stretch occupies residues 293–299; that stretch reads IVEHDQL.

This sequence belongs to the two pore domain potassium channel (TC 1.A.1.8) family. In terms of assembly, homodimer; disulfide-linked. Heterodimer with KCNK2; disulfide-linked. In astrocytes, forms mostly heterodimeric potassium channels with KCNK2, with only a minor proportion of functional channels containing homodimeric KCNK1. Interacts with KCNK3 and KCNK9, forming functional heterodimeric channels. Interacts with GNG4. Identified in a complex with PSD and ARF6; interacts only with PSD that is bound to ARF6. Interacts with UBE2I. Post-translationally, sumoylation is controversial. Sumoylated by UBE2I. Not sumoylated when expressed in xenopus oocytes or mammalian cells. Sumoylation inactivates the channel, but does not interfere with expression at the cell membrane. Sumoylation of a single subunit is sufficient to silence the dimeric channel. Sumoylation of KCNK1 is sufficient to silence heterodimeric channels formed by KCNK1 and KCNK3 or KCNK9. Desumoylated by SENP1; this activates the channel. Desumoylated by SENP1; this strongly increases halothane-mediated activation of heterodimeric channels formed with KCNK9. SENP1 treatment has no effect.

Its subcellular location is the cell membrane. The protein localises to the recycling endosome. The protein resides in the synaptic cell membrane. It localises to the cytoplasmic vesicle. It is found in the perikaryon. Its subcellular location is the cell projection. The protein localises to the dendrite. The protein resides in the apical cell membrane. The enzyme catalyses K(+)(in) = K(+)(out). The catalysed reaction is NH4(+)(in) = NH4(+)(out). It catalyses the reaction Na(+)(in) = Na(+)(out). It carries out the reaction Rb(+)(in) = Rb(+)(out). The enzyme catalyses Cs(+)(in) = Cs(+)(out). The catalysed reaction is Li(+)(in) = Li(+)(out). It catalyses the reaction L-glutamate(out) = L-glutamate(in). It carries out the reaction chloride(in) = chloride(out). Functionally, ion channel that contributes to passive transmembrane potassium transport and to the regulation of the resting membrane potential in brain astrocytes, but also in kidney and in other tissues. Forms dimeric channels through which potassium ions pass in accordance with their electrochemical gradient. The channel is selective for K(+) ions at physiological potassium concentrations and at neutral pH, but becomes permeable to Na(+) at subphysiological K(+) levels and upon acidification of the extracellular medium. The homodimer has very low potassium channel activity, when expressed in heterologous systems, and can function as weakly inward rectifying potassium channel. Channel activity is modulated by activation of serotonin receptors. Heterodimeric channels containing KCNK1 and KCNK2 have much higher activity, and may represent the predominant form in astrocytes. Heterodimeric channels containing KCNK1 and KCNK3 or KCNK9 have much higher activity. Heterodimeric channels formed by KCNK1 and KCNK9 may contribute to halothane-sensitive currents. Mediates outward rectifying potassium currents in dentate gyrus granule cells and contributes to the regulation of their resting membrane potential. Contributes to the regulation of action potential firing in dentate gyrus granule cells and down-regulates their intrinsic excitability. In astrocytes, the heterodimer formed by KCNK1 and KCNK2 is required for rapid glutamate release in response to activation of G-protein coupled receptors, such as F2R and CNR1. Required for normal ion and water transport in the kidney. Contributes to the regulation of the resting membrane potential of pancreatic beta cells. The low channel activity of homodimeric KCNK1 may be due to sumoylation. The low channel activity may be due to rapid internalization from the cell membrane and retention in recycling endosomes. Permeable to monovalent cations with ion selectivity for K(+) &gt; Rb(+) &gt;&gt; NH4(+) &gt;&gt; Cs(+) = Na(+) = Li(+). The protein is Potassium channel subfamily K member 1 of Cavia porcellus (Guinea pig).